Consider the following 276-residue polypeptide: NADH-cytochrome b5 reductase 2 (276 aa).

The region spanning E15–N127 is the FAD-binding FR-type domain. Position 17 is an N6-acetyllysine (K17). Residue Y18 is modified to Phosphotyrosine. Residues E107–N137 and L146–L181 contribute to the FAD site.

This sequence belongs to the flavoprotein pyridine nucleotide cytochrome reductase family. FAD is required as a cofactor.

It carries out the reaction 2 Fe(III)-[cytochrome b5] + NADH = 2 Fe(II)-[cytochrome b5] + NAD(+) + H(+). NADH-cytochrome b5 reductases are involved in desaturation and elongation of fatty acids, cholesterol biosynthesis, drug metabolism, and, in erythrocyte, methemoglobin reduction. Responsible for NADH-dependent lucigenin chemiluminescence in spermatozoa by reducing both lucigenin and 2-[4-iodophenyl]-3-[4-nitrophenyl]-5-[2,4-disulfophenyl]-2H tetrazolium monosodium salt (WST-1). In Mus musculus (Mouse), this protein is NADH-cytochrome b5 reductase 2 (Cyb5r2).